Consider the following 411-residue polypeptide: LL-diaminopimelate aminotransferase (411 aa).

Substrate is bound by residues Tyr-16 and Gly-43. Pyridoxal 5'-phosphate is bound by residues Tyr-73, 109–110 (AK), Tyr-133, Asn-188, Tyr-219, and 247–249 (SYS). Residues Lys-110, Tyr-133, and Asn-188 each coordinate substrate. An N6-(pyridoxal phosphate)lysine modification is found at Lys-250. Residues Arg-258 and Asn-293 each coordinate pyridoxal 5'-phosphate. 2 residues coordinate substrate: Asn-293 and Arg-389.

Belongs to the class-I pyridoxal-phosphate-dependent aminotransferase family. LL-diaminopimelate aminotransferase subfamily. As to quaternary structure, homodimer. Pyridoxal 5'-phosphate is required as a cofactor.

It catalyses the reaction (2S,6S)-2,6-diaminopimelate + 2-oxoglutarate = (S)-2,3,4,5-tetrahydrodipicolinate + L-glutamate + H2O + H(+). Its pathway is amino-acid biosynthesis; L-lysine biosynthesis via DAP pathway; LL-2,6-diaminopimelate from (S)-tetrahydrodipicolinate (aminotransferase route): step 1/1. In terms of biological role, involved in the synthesis of meso-diaminopimelate (m-DAP or DL-DAP), required for both lysine and peptidoglycan biosynthesis. Catalyzes the direct conversion of tetrahydrodipicolinate to LL-diaminopimelate. The protein is LL-diaminopimelate aminotransferase of Methanosphaera stadtmanae (strain ATCC 43021 / DSM 3091 / JCM 11832 / MCB-3).